We begin with the raw amino-acid sequence, 255 residues long: uncharacterized protein (255 aa).

This is an uncharacterized protein from Paracoccus denitrificans.